The sequence spans 343 residues: Heme A synthase (343 aa).

The next 8 helical transmembrane spans lie at 13-33 (VALWLFVVAVLVFAMVVVGGA), 96-116 (HRLLGRLVGVVFAIPFVFFLI), 130-150 (VLLGLGGLQGVVGWWMVSSGL), 165-185 (LGLALALFVFVIWTALDAWAG), 197-217 (GWALAFLGAVFFQSLLGALVA), 258-278 (LHHRLMAYALFVAAIVAGVAA), 290-310 (LTAFVLVGVVCLQAGLGIWTL), and 311-331 (MTAVPLALGVLHQAGAAILLA). Heme is bound at residue histidine 260. A heme-binding site is contributed by histidine 322.

The protein belongs to the COX15/CtaA family. Type 2 subfamily. Interacts with CtaB. The cofactor is heme b.

It is found in the cell membrane. It catalyses the reaction Fe(II)-heme o + 2 A + H2O = Fe(II)-heme a + 2 AH2. The protein operates within porphyrin-containing compound metabolism; heme A biosynthesis; heme A from heme O: step 1/1. Functionally, catalyzes the conversion of heme O to heme A by two successive hydroxylations of the methyl group at C8. The first hydroxylation forms heme I, the second hydroxylation results in an unstable dihydroxymethyl group, which spontaneously dehydrates, resulting in the formyl group of heme A. This Caulobacter sp. (strain K31) protein is Heme A synthase.